A 185-amino-acid polypeptide reads, in one-letter code: ATP synthase subunit delta (185 aa).

The protein belongs to the ATPase delta chain family. As to quaternary structure, F-type ATPases have 2 components, F(1) - the catalytic core - and F(0) - the membrane proton channel. F(1) has five subunits: alpha(3), beta(3), gamma(1), delta(1), epsilon(1). F(0) has three main subunits: a(1), b(2) and c(10-14). The alpha and beta chains form an alternating ring which encloses part of the gamma chain. F(1) is attached to F(0) by a central stalk formed by the gamma and epsilon chains, while a peripheral stalk is formed by the delta and b chains.

The protein resides in the cell inner membrane. Functionally, f(1)F(0) ATP synthase produces ATP from ADP in the presence of a proton or sodium gradient. F-type ATPases consist of two structural domains, F(1) containing the extramembraneous catalytic core and F(0) containing the membrane proton channel, linked together by a central stalk and a peripheral stalk. During catalysis, ATP synthesis in the catalytic domain of F(1) is coupled via a rotary mechanism of the central stalk subunits to proton translocation. This protein is part of the stalk that links CF(0) to CF(1). It either transmits conformational changes from CF(0) to CF(1) or is implicated in proton conduction. This is ATP synthase subunit delta from Ehrlichia chaffeensis (strain ATCC CRL-10679 / Arkansas).